The sequence spans 454 residues: GTPase Der (454 aa).

2 consecutive EngA-type G domains span residues 4 to 168 and 178 to 352; these read PQVA…PEKD and MKIA…KQAQ. GTP-binding positions include 10–17, 57–61, 120–123, 184–191, 231–235, and 296–299; these read GRPNVGKS, DTGGM, NKAD, GRRNVGKS, DTPGL, and NKWD. The KH-like domain occupies 353–437; sequence SRVSTGELNR…PIKLYMQQRS (85 aa).

The protein belongs to the TRAFAC class TrmE-Era-EngA-EngB-Septin-like GTPase superfamily. EngA (Der) GTPase family. In terms of assembly, associates with the 50S ribosomal subunit.

Its function is as follows. GTPase that plays an essential role in the late steps of ribosome biogenesis. The polypeptide is GTPase Der (Rhodopirellula baltica (strain DSM 10527 / NCIMB 13988 / SH1)).